Reading from the N-terminus, the 198-residue chain is Suppressor of cytokine signaling 2 (198 aa).

A disordered region spans residues 1-29 (MTLRCLEPSGNGADRTRSQWGTAGLPEEQ). The interval 1 to 75 (MTLRCLEPSG…PEGTFLIRDS (75 aa)) is interaction with AREL1. At S30 the chain carries Phosphoserine. The SH2 domain maps to 48–156 (WYWGSMTVNE…TVHLYLTKPL (109 aa)). S52 is subject to Phosphoserine; by PKC. Residues 151-197 (YLTKPLYTSAPTLQHFCRLAINKCTGTIWGLPLPTRLKDYLEEYKFQ) form the SOCS box domain. A Glycyl lysine isopeptide (Lys-Gly) (interchain with G-Cter in ubiquitin) cross-link involves residue K173.

In terms of assembly, substrate-recognition component of the ECS(SOCS2) complex, composed of SOCS2, CUL5, ELOB, ELOC and RNF7/RBX2. Interacts with IGF1R. Interacts with DCUN1D1. Ubiquitinated; mediated by AREL1 and leading to its subsequent proteasomal degradation. Ubiquitination is dependent on phosphorylation at Ser-52, by PKC and is stimulated by LPS. In terms of processing, phosphorylation at Ser-52 by PKC facilitates its ubiquitination and proteasomal degradation. As to expression, expressed primarily in the testis, some expression in liver and lung.

The protein localises to the cytoplasm. It participates in protein modification; protein ubiquitination. Its function is as follows. Substrate-recognition component of a cullin-5-RING E3 ubiquitin-protein ligase complex (ECS complex, also named CRL5 complex), which mediates the ubiquitination and subsequent proteasomal degradation of target proteins, such as EPOR and GHR. Specifically recognizes and binds phosphorylated proteins via its SH2 domain, promoting their ubiquitination. The ECS(SOCS2) complex acts as a key regulator of growth hormone receptor (GHR) levels by mediating ubiquitination and degradation of GHR, following GHR phosphorylation by JAK2. The ECS(SOCS2) also catalyzes ubiquitination and degradation of JAK2-phosphorylated EPOR. This is Suppressor of cytokine signaling 2 from Mus musculus (Mouse).